We begin with the raw amino-acid sequence, 338 residues long: UDP-glucose 4-epimerase (338 aa).

Residues 11–12 (YI), 31–36 (DNLCNS), 58–59 (DI), 80–84 (FAGLK), Asn-99, Ser-124, Tyr-149, Lys-153, and Phe-178 contribute to the NAD(+) site. 2 residues coordinate substrate: Ser-124 and Tyr-149. Catalysis depends on Tyr-149, which acts as the Proton acceptor. Substrate contacts are provided by residues Asn-179, 199 to 200 (NL), 216 to 218 (AIF), Arg-231, 292 to 295 (REGD), and Tyr-299.

The protein belongs to the NAD(P)-dependent epimerase/dehydratase family. Homodimer. NAD(+) is required as a cofactor.

The enzyme catalyses UDP-alpha-D-glucose = UDP-alpha-D-galactose. It participates in carbohydrate metabolism; galactose metabolism. Involved in the metabolism of galactose. Catalyzes the conversion of UDP-galactose (UDP-Gal) to UDP-glucose (UDP-Glc) through a mechanism involving the transient reduction of NAD. This chain is UDP-glucose 4-epimerase (galE), found in Yersinia pestis.